Reading from the N-terminus, the 129-residue chain is Large ribosomal subunit protein bL19 (129 aa).

The protein belongs to the bacterial ribosomal protein bL19 family.

Its function is as follows. This protein is located at the 30S-50S ribosomal subunit interface and may play a role in the structure and function of the aminoacyl-tRNA binding site. This is Large ribosomal subunit protein bL19 from Rhizorhabdus wittichii (strain DSM 6014 / CCUG 31198 / JCM 15750 / NBRC 105917 / EY 4224 / RW1) (Sphingomonas wittichii).